The following is a 181-amino-acid chain: MRVLLLGPPGAGKGTQAVKLAEKLGIPQISTGELFRRNIEEGTKLGVEAKRYLDAGDLVPSDLTNELVDDRLNNPDAANGFILDGYPRSVEQAKALHEMLERRGTDIDAVLEFRVSEEVLLERLKGRGRADDTDDVILNRMKVYRDETAPLLEYYRDQLKTVDAVGTMDEVFARALRALGK.

10 to 15 (GAGKGT) contacts ATP. An NMP region spans residues 30-59 (STGELFRRNIEEGTKLGVEAKRYLDAGDLV). Residues Thr-31, Arg-36, 57–59 (DLV), 85–88 (GYPR), and Gln-92 contribute to the AMP site. The segment at 126–132 (GRGRADD) is LID. Residue Arg-127 coordinates ATP. 2 residues coordinate AMP: Arg-129 and Arg-140. Gly-166 lines the ATP pocket.

This sequence belongs to the adenylate kinase family. In terms of assembly, monomer.

It is found in the cytoplasm. It carries out the reaction AMP + ATP = 2 ADP. The protein operates within purine metabolism; AMP biosynthesis via salvage pathway; AMP from ADP: step 1/1. In terms of biological role, catalyzes the reversible transfer of the terminal phosphate group between ATP and AMP. Plays an important role in cellular energy homeostasis and in adenine nucleotide metabolism. The protein is Adenylate kinase of Mycobacterium tuberculosis (strain ATCC 25177 / H37Ra).